A 391-amino-acid polypeptide reads, in one-letter code: N-acetylaspartylglutamate synthase A (391 aa).

Positions 115–300 (FQELAGHGVP…VGGIIADYTM (186 aa)) constitute an ATP-grasp domain. ATP contacts are provided by residues Lys154, 189–199 (QKYVKESHGKD), and Arg215. Positions 260, 273, and 275 each coordinate Mg(2+). Mn(2+) is bound by residues Asp260, Glu273, and Asn275. The residue at position 319 (Ser319) is a Phosphoserine. Residues 341 to 350 (TINSGSTSSE) show a composition bias toward polar residues. The segment at 341-379 (TINSGSTSSESEPELGEIRDSSASTMGAPPSMLPEPGYN) is disordered.

Belongs to the RimK family. Mg(2+) serves as cofactor. The cofactor is Mn(2+).

Its subcellular location is the cytoplasm. It catalyses the reaction N-acetyl-L-aspartate + L-glutamate + ATP = N-acetyl-L-aspartyl-L-glutamate + ADP + phosphate + H(+). The enzyme catalyses N-acetyl-L-aspartate + 2 L-glutamate + 2 ATP = N-acetyl-L-aspartyl-L-glutamyl-L-glutamate + 2 ADP + 2 phosphate + 2 H(+). Catalyzes the synthesis of N-acetyl-L-aspartyl-L-glutamate (NAAG) and N-acetyl-L-aspartyl-L-glutamyl-L-glutamate. This is N-acetylaspartylglutamate synthase A (RIMKLA) from Homo sapiens (Human).